The chain runs to 525 residues: Vesicular inhibitory amino acid transporter (525 aa).

The Cytoplasmic segment spans residues Met1–Met132. Residues Phe133–Ile153 form a helical membrane-spanning segment. Residues Phe154–Arg204 lie on the Lumenal, vesicle side of the membrane. 3'-nitrotyrosine is present on Tyr186. Residues Val205 to Ser225 traverse the membrane as a helical segment. The Cytoplasmic portion of the chain corresponds to Gly226–Lys265. The helical transmembrane segment at Phe266 to Leu286 threads the bilayer. Over Ser287–Lys305 the chain is Lumenal, vesicle. A helical membrane pass occupies residues Phe306–Leu326. Topologically, residues Glu327–Asn341 are cytoplasmic. The chain crosses the membrane as a helical span at residues Trp342–Trp362. Over Ala363 to Asn383 the chain is Lumenal, vesicle. Residues Leu384 to Val404 form a helical membrane-spanning segment. Residues Leu405–Ala438 are Cytoplasmic-facing. Residues Leu439–Leu459 form a helical membrane-spanning segment. The Lumenal, vesicle portion of the chain corresponds to Thr460–Gly461. The helical transmembrane segment at Ser462–Trp482 threads the bilayer. At Arg483–Gln489 the chain is on the cytoplasmic side. The chain crosses the membrane as a helical span at residues Val490 to His510. Over Ser511–Asp525 the chain is Lumenal, vesicle.

Belongs to the amino acid/polyamine transporter 2 family. Brain and retina. Localized in horizontal cell tips at both rod and cone terminals.

Its subcellular location is the cytoplasmic vesicle membrane. The protein localises to the presynapse. The catalysed reaction is 4-aminobutanoate(out) + n H(+)(in) = 4-aminobutanoate(in) + n H(+)(out). It catalyses the reaction glycine(out) + n H(+)(in) = glycine(in) + n H(+)(out). The enzyme catalyses beta-alanine(out) + n H(+)(in) = beta-alanine(in) + n H(+)(out). Chloride ions activate 4-aminobutanoate/H(+) transport. In terms of biological role, antiporter that exchanges vesicular protons for cytosolic 4-aminobutanoate or to a lesser extend glycine, thus allowing their secretion from nerve terminals. The transport is equally dependent on the chemical and electrical components of the proton gradient. May also transport beta-alanine. Acidification of GABAergic synaptic vesicles is a prerequisite for 4-aminobutanoate uptake. In Mus musculus (Mouse), this protein is Vesicular inhibitory amino acid transporter.